The primary structure comprises 267 residues: Luciferase (267 aa).

N-linked (GlcNAc...) asparagine glycosylation is present at asparagine 4. Residues 17 to 39 (LSSRSIAITCGVVLASAIAFPII) traverse the membrane as a helical segment.

Belongs to the fungal luciferase family.

The protein localises to the membrane. It carries out the reaction 3-hydroxyhispidin + O2 = (E)-caffeoylpyruvate + hnu + CO2. It catalyses the reaction 3-hydroxyhispidin + O2 = 4-[(E)-2-(3,4-dihydroxyphenyl)ethenyl]-1,7-dihydroxy-2,3,5-trioxabicyclo[2.2.2]oct-7-en-6-one. Functionally, luciferase; part of the gene cluster that mediates the fungal bioluminescence cycle. Uses the fungal luciferin 3-hydroxyhispidin as a substrate to produce an endoperoxide as a high-energy intermediate with decomposition that yields oxyluciferin (also known as caffeoylpyruvate) and light emission. The fungal bioluminescence cycle begins with the hispidin synthetase that catalyzes the formation of hispidin which is further hydroxylated by the hispidin-3-hydroxylase, yielding the fungal luciferin 3-hydroxyhispidin. The luciferase then produces an endoperoxide as a high-energy intermediate with decomposition that yields oxyluciferin and light emission. Oxyluciferin can be recycled to caffeic acid by caffeoylpyruvate hydrolase. The polypeptide is Luciferase (Neonothopanus nambi (Agaricus nambi)).